A 2009-amino-acid polypeptide reads, in one-letter code: Sodium channel protein type 1 subunit alpha (2009 aa).

Residues 1–128 (MEQTVLVPPG…KIAIKILVHS (128 aa)) are Cytoplasmic-facing. A compositionally biased stretch (basic and acidic residues) spans 28–48 (RIAEEKAKNPKPDKKDDDENG). The disordered stretch occupies residues 28–60 (RIAEEKAKNPKPDKKDDDENGPKPNSDLEAGKN). One copy of the I repeat lies at 110–454 (ILTPFNPLRK…QQMLEQLKKQ (345 aa)). A helical membrane pass occupies residues 129–146 (LFSMLIMCTILTNCVFMT). Residues 147–152 (MSNPPD) are Extracellular-facing. A helical membrane pass occupies residues 153–177 (WTKNVEYTFTGIYTFESLIKIIARG). The Cytoplasmic portion of the chain corresponds to 178 to 188 (FCLEDFTFLRD). A helical membrane pass occupies residues 189–205 (PWNWLDFTVITFAYVTE). Residues 206–213 (FVDLGNVS) lie on the Extracellular side of the membrane. The chain crosses the membrane as a helical span at residues 214-235 (ALRTFRVLRALKTISVIPGLKT). The Cytoplasmic portion of the chain corresponds to 236–245 (IVGALIQSVK). Residues 246 to 269 (KLSDVMILTVFCLSVFALIGLQLF) traverse the membrane as a helical segment. The Extracellular segment spans residues 270 to 369 (MGNLRNKCVQ…YGYTSFDTFS (100 aa)). 2 disulfide bridges follow: Cys277–Cys345 and Cys336–Cys351. 4 N-linked (GlcNAc...) asparagine glycosylation sites follow: Asn295, Asn301, Asn306, and Asn338. An intramembrane region (pore-forming) is located at residues 370–384 (WAFLSLFRLMTQDFW). The Extracellular portion of the chain corresponds to 385–397 (ENLYQLTLRAAGK). The chain crosses the membrane as a helical span at residues 398 to 423 (TYMIFFVLVIFLGSFYLINLILAVVA). Over 424–768 (MAYEEQNQAT…HIVNLVVMDP (345 aa)) the chain is Cytoplasmic. The interval 455–528 (QEAAQQAAAT…EFHKSESEDS (74 aa)) is disordered. Low complexity predominate over residues 456-466 (EAAQQAAATTA). Ser470 bears the Phosphoserine mark. Residues 479–492 (LSDSSSEASKLSSK) show a composition bias toward low complexity. Positions 495–506 (KERRNRRKKRKQ) are enriched in basic residues. Residues 507–528 (KEQSGGEEKDDDEFHKSESEDS) show a composition bias toward basic and acidic residues. A phosphoserine mark is found at Ser523, Ser525, Ser550, Ser551, Ser607, and Ser730. A disordered region spans residues 584-627 (VGSENDFADDEHSTFEDNESRRDSLFVPRRHGERRNSNLSQTSR). The span at 593-607 (DEHSTFEDNESRRDS) shows a compositional bias: basic and acidic residues. The II repeat unit spans residues 750–1022 (CSPYWLKVKH…QIAVDRMHKG (273 aa)). Residues 769–787 (FVDLAITICIVLNTLFMAM) traverse the membrane as a helical segment. At 788-797 (EHYPMTEHFN) the chain is on the extracellular side. The helical transmembrane segment at 798–820 (HVLTVGNLVFTGIFTAEMFLKII) threads the bilayer. Residues 821-830 (AMDPYYYFQE) are Cytoplasmic-facing. Residues 831 to 849 (GWNIFDGFIVTLSLVELGL) traverse the membrane as a helical segment. Topologically, residues 850–854 (ANVEG) are extracellular. A helical membrane pass occupies residues 855-874 (LSVLRSFRLLRVFKLAKSWP). Residues 875-891 (TLNMLIKIIGNSVGALG) are Cytoplasmic-facing. The chain crosses the membrane as a helical span at residues 892 to 912 (NLTLVLAIIVFIFAVVGMQLF). The Extracellular segment spans residues 913–938 (GKSYKDCVCKIATDCKLPRWHMNDFF). Residues Cys921 and Cys927 are joined by a disulfide bond. The segment at residues 939 to 952 (HSFLIVFRVLCGEW) is an intramembrane region (pore-forming). At 953 to 965 (IETMWDCMEVAGQ) the chain is on the extracellular side. Cys959 and Cys968 form a disulfide bridge. A helical transmembrane segment spans residues 966 to 992 (AMCLTVFMMVMVIGNLVVLNLFLALLL). The Cytoplasmic portion of the chain corresponds to 993 to 1218 (SSFSADNLAA…RTCFRIVEHN (226 aa)). The tract at residues 1129–1163 (TEDFSSESDLEESKEKLNESSSSSEGSTVDIGAPA) is disordered. The III repeat unit spans residues 1200–1514 (RGKQWWNLRR…KKYYNAMKKL (315 aa)). A helical membrane pass occupies residues 1219–1237 (WFETFIVFMILLSSGALAF). Residues 1238–1250 (EDIYIDQRKTIKT) lie on the Extracellular side of the membrane. The helical transmembrane segment at 1251-1276 (MLEYADKVFTYIFILEMLLKWVAYGY) threads the bilayer. Over 1277-1278 (QT) the chain is Cytoplasmic. A helical membrane pass occupies residues 1279–1304 (YFTNAWCWLDFLIVDVSLVSLTANAL). Topologically, residues 1305-1313 (GYSELGAIK) are extracellular. The chain crosses the membrane as a helical span at residues 1314 to 1332 (SLRTLRALRPLRALSRFEG). Residues 1333–1345 (MRVVVNALLGAIP) are Cytoplasmic-facing. The chain crosses the membrane as a helical span at residues 1346–1369 (SIMNVLLVCLIFWLIFSIMGVNLF). Over 1370-1415 (AGKFYHCVNTTTGDIFEISEVNNHSDCLKLIERNETARWKNVKVNF) the chain is Extracellular. A disulfide bridge connects residues Cys1376 and Cys1396. The segment at residues 1416 to 1433 (DNVGFGYLSLLQVATFKG) is an intramembrane region (pore-forming). Topologically, residues 1434–1457 (WMDIMYAAVDSRNVELQPKYEESL) are extracellular. Residues 1458–1483 (YMYLYFVIFIIFGSFFTLNLFIGVII) traverse the membrane as a helical segment. Over 1484 to 1541 (DNFNQQKKKFGGQDIFMTEEQKKYYNAMKKLGSKKPQKPIPRPGNKFQGMVFDFVTRQ) the chain is Cytoplasmic. Ser1516 is modified (phosphoserine; by PKC). The stretch at 1523-1821 (IPRPGNKFQG…WEKFDPDATQ (299 aa)) is one IV repeat. Residues 1542 to 1560 (VFDISIMILICLNMVTMMV) form a helical membrane-spanning segment. Topologically, residues 1561-1571 (ETDDQSDYVTS) are extracellular. An S1-S2 loop of repeat IV region spans residues 1561 to 1571 (ETDDQSDYVTS). The helical transmembrane segment at 1572-1593 (ILSRINLVFIVLFTGECVLKLI) threads the bilayer. Over 1594–1601 (SLRHYYFT) the chain is Cytoplasmic. A helical transmembrane segment spans residues 1602–1623 (IGWNIFDFVVVILSIVGMFLAE). The S3b-S4 loop of repeat IV stretch occupies residues 1619-1636 (MFLAELIEKYFVSPTLFR). The Extracellular segment spans residues 1624 to 1636 (LIEKYFVSPTLFR). The helical transmembrane segment at 1637–1655 (VIRLARIGRILRLIKGAKG) threads the bilayer. Topologically, residues 1656-1665 (IRTLLFALMM) are cytoplasmic. A helical membrane pass occupies residues 1666–1688 (SLPALFNIGLLLFLVMFIYAIFG). The Extracellular segment spans residues 1689–1711 (MSNFAYVKREVGIDDMFNFETFG). An intramembrane region (pore-forming) is located at residues 1712–1726 (NSMICLFQITTSAGW). Topologically, residues 1727-1759 (DGLLAPILNSKPPDCDPNKVNPGSSVKGDCGNP) are extracellular. Cys1741 and Cys1756 are disulfide-bonded. The helical transmembrane segment at 1760–1788 (SVGIFFFVSYIIISFLVVVNMYIAVILEN) threads the bilayer. At 1789–2009 (FSVATEESAE…EGKDEKAKGK (221 aa)) the chain is on the cytoplasmic side. The IQ domain occupies 1915-1944 (EEVSAVIIQRAYRRHLLKRTVKQASFTYNK). Residues 1984 to 2009 (PSYDRVTKPIVEKHEQEGKDEKAKGK) form a disordered region. Residues 1988-2009 (RVTKPIVEKHEQEGKDEKAKGK) are compositionally biased toward basic and acidic residues.

It belongs to the sodium channel (TC 1.A.1.10) family. Nav1.1/SCN1A subfamily. The Nav1.1 voltage-gated sodium channel consists of an ion-conducting alpha subunit SCN1A which is functional on its own regulated by one or more beta-1 (SCN1B), beta-2 (SCN2B), beta-3 (SCN3B) and beta-4 (SCN4B) subunits. SCN1B and SCN3B are non-covalently associated with SCN1A. SCN2B and SCN4B are disulfide-linked to SCN1A. SCN1B regulates both the expression at the plasma membrane and the voltage dependence of Nav1.1 inactivation. SCN3B and SCN4B reduce Nav1.1 conductance. Probably interacts with TMEM233; modulates the gating properties of NaV1.1. Interacts with FGF13; regulates the steady-state inactivation of Nav.1.1. Post-translationally, phosphorylation at Ser-1516 by PKC in a highly conserved cytoplasmic loop slows inactivation of the sodium channel and reduces peak sodium currents. In terms of tissue distribution, present in cerebellar Purkinje neurons (at protein level). Expressed by myelinated, non-C-fiber neurons in sensory ganglia.

It localises to the cell membrane. It catalyses the reaction Na(+)(in) = Na(+)(out). Activated by the spider toxins Hm1a and Hm1b (H.maculata, AC P60992 and AC P0DOC5) eliciting acute pain and mechanical allodynia. Functionally, pore-forming subunit of Nav1.1, a voltage-gated sodium (Nav) channel that directly mediates the depolarizing phase of action potentials in excitable membranes. Navs, also called VGSCs (voltage-gated sodium channels) or VDSCs (voltage-dependent sodium channels), operate by switching between closed and open conformations depending on the voltage difference across the membrane. In the open conformation they allow Na(+) ions to selectively pass through the pore, along their electrochemical gradient. The influx of Na(+) ions provokes membrane depolarization, initiating the propagation of electrical signals throughout cells and tissues. By regulating the excitability of neurons, ensures that they respond appropriately to synaptic inputs, maintaining the balance between excitation and inhibition in brain neural circuits. Nav1.1 plays a role in controlling the excitability and action potential propagation from somatosensory neurons, thereby contributing to the sensory perception of mechanically-induced pain. In Mus musculus (Mouse), this protein is Sodium channel protein type 1 subunit alpha.